Consider the following 191-residue polypeptide: Inosine triphosphate pyrophosphatase (191 aa).

9 to 14 provides a ligand contact to ITP; it reads TGNAKK. A Mg(2+)-binding site is contributed by Glu39. Residues Lys51, 67–68, Lys84, 143–146, Lys166, and 171–172 each bind ITP; these read DT, FGWD, and HR.

This sequence belongs to the HAM1 NTPase family. As to quaternary structure, homodimer. Mg(2+) serves as cofactor. Mn(2+) is required as a cofactor.

Its subcellular location is the cytoplasm. The enzyme catalyses ITP + H2O = IMP + diphosphate + H(+). The catalysed reaction is dITP + H2O = dIMP + diphosphate + H(+). It carries out the reaction XTP + H2O = XMP + diphosphate + H(+). In terms of biological role, pyrophosphatase that hydrolyzes non-canonical purine nucleotides such as inosine triphosphate (ITP), deoxyinosine triphosphate (dITP) or xanthosine 5'-triphosphate (XTP) to their respective monophosphate derivatives. The enzyme does not distinguish between the deoxy- and ribose forms. Probably excludes non-canonical purines from RNA and DNA precursor pools, thus preventing their incorporation into RNA and DNA and avoiding chromosomal lesions. This Drosophila melanogaster (Fruit fly) protein is Inosine triphosphate pyrophosphatase.